Consider the following 56-residue polypeptide: Large ribosomal subunit protein eL37 (56 aa).

Zn(2+) is bound by residues Cys19, Cys22, Cys34, and Cys37. The segment at 19–37 (CRRCGSVSFNVHTKQCTSC) adopts a C4-type zinc-finger fold.

The protein belongs to the eukaryotic ribosomal protein eL37 family. Zn(2+) serves as cofactor.

Binds to the 23S rRNA. The protein is Large ribosomal subunit protein eL37 (rpl37e) of Methanosarcina acetivorans (strain ATCC 35395 / DSM 2834 / JCM 12185 / C2A).